The chain runs to 634 residues: 1-deoxy-D-xylulose-5-phosphate synthase (634 aa).

Thiamine diphosphate is bound by residues His74 and 115 to 117; that span reads AHS. Mg(2+) is bound at residue Asp146. Thiamine diphosphate-binding positions include 147–148, Asn176, Tyr283, and Glu365; that span reads GA. A Mg(2+)-binding site is contributed by Asn176.

It belongs to the transketolase family. DXPS subfamily. In terms of assembly, homodimer. Mg(2+) is required as a cofactor. It depends on thiamine diphosphate as a cofactor.

The enzyme catalyses D-glyceraldehyde 3-phosphate + pyruvate + H(+) = 1-deoxy-D-xylulose 5-phosphate + CO2. The protein operates within metabolic intermediate biosynthesis; 1-deoxy-D-xylulose 5-phosphate biosynthesis; 1-deoxy-D-xylulose 5-phosphate from D-glyceraldehyde 3-phosphate and pyruvate: step 1/1. Its function is as follows. Catalyzes the acyloin condensation reaction between C atoms 2 and 3 of pyruvate and glyceraldehyde 3-phosphate to yield 1-deoxy-D-xylulose-5-phosphate (DXP). This chain is 1-deoxy-D-xylulose-5-phosphate synthase, found in Burkholderia orbicola (strain MC0-3).